The chain runs to 209 residues: Eukaryotic translation initiation factor isoform 4E-2 (209 aa).

The interval 1 to 29 (MAEVEAALPVAATETPEVAAEGDAGAAEA) is disordered. Residues 9–29 (PVAATETPEVAAEGDAGAAEA) show a composition bias toward low complexity. MRNA is bound by residues 51 to 56 (PGAAWG), K83, and 101 to 102 (WE). A disulfide bridge links C106 with C145. Residues 152–157 (RQRQDK) and 197–200 (RSQK) contribute to the mRNA site.

The protein belongs to the eukaryotic initiation factor 4E family. In terms of assembly, EIF4F is a multi-subunit complex, the composition of which varies with external and internal environmental conditions. It is composed of at least EIF4A, EIF4E and EIF4G. EIF4E is also known to interact with other partners. In higher plants two isoforms of EIF4F have been identified, named isoform EIF4F and isoform EIF(iso)4F. Isoform EIF4F has subunits p220 and p26, whereas isoform EIF(iso)4F has subunits p82 and p28. According to the redox status, the Cys-106-Cys-145 disulfide bridge may have a role in regulating protein function by affecting its ability to bind capped mRNA.

It localises to the cytoplasm. The protein localises to the nucleus. Functionally, component of the protein complex eIF4F, which is involved in the recognition of the mRNA cap, ATP-dependent unwinding of 5'-terminal secondary structure and recruitment of mRNA to the ribosome. Recognizes and binds the 7-methylguanosine-containing mRNA cap during an early step in the initiation of protein synthesis and facilitates ribosome binding by inducing the unwinding of the mRNAs secondary structures. The sequence is that of Eukaryotic translation initiation factor isoform 4E-2 from Triticum aestivum (Wheat).